The primary structure comprises 368 residues: Transaldolase (368 aa).

K140 (schiff-base intermediate with substrate) is an active-site residue.

Belongs to the transaldolase family. Type 2 subfamily.

The protein localises to the cytoplasm. The enzyme catalyses D-sedoheptulose 7-phosphate + D-glyceraldehyde 3-phosphate = D-erythrose 4-phosphate + beta-D-fructose 6-phosphate. Its pathway is carbohydrate degradation; pentose phosphate pathway; D-glyceraldehyde 3-phosphate and beta-D-fructose 6-phosphate from D-ribose 5-phosphate and D-xylulose 5-phosphate (non-oxidative stage): step 2/3. Transaldolase is important for the balance of metabolites in the pentose-phosphate pathway. In Thermobifida fusca (strain YX), this protein is Transaldolase.